Consider the following 488-residue polypeptide: Malonate-semialdehyde dehydrogenase (488 aa).

Residues Ala150, Phe152, Lys176, Glu179, Arg180, Ser229, and Thr251 each coordinate NAD(+). The Nucleophile role is filled by Cys284. Glu382 contacts NAD(+).

The protein belongs to the aldehyde dehydrogenase family. IolA subfamily. Homotetramer.

It catalyses the reaction 3-oxopropanoate + NAD(+) + CoA + H2O = hydrogencarbonate + acetyl-CoA + NADH + H(+). The catalysed reaction is 2-methyl-3-oxopropanoate + NAD(+) + CoA + H2O = propanoyl-CoA + hydrogencarbonate + NADH + H(+). It participates in polyol metabolism; myo-inositol degradation into acetyl-CoA; acetyl-CoA from myo-inositol: step 7/7. In terms of biological role, catalyzes the oxidation of malonate semialdehyde (MSA) and methylmalonate semialdehyde (MMSA) into acetyl-CoA and propanoyl-CoA, respectively. Is involved in a myo-inositol catabolic pathway. Bicarbonate, and not CO2, is the end-product of the enzymatic reaction. The polypeptide is Malonate-semialdehyde dehydrogenase (Listeria monocytogenes serovar 1/2a (strain ATCC BAA-679 / EGD-e)).